The sequence spans 525 residues: Averantin hydroxylase (525 aa).

Residues 36–56 (VLATFVAGIGALLLWTLTTVF) form a helical membrane-spanning segment. N-linked (GlcNAc...) asparagine glycosylation occurs at N315. C462 is a heme binding site.

It belongs to the cytochrome P450 family. Heme serves as cofactor.

The protein localises to the membrane. The catalysed reaction is (1'S)-averantin + reduced [NADPH--hemoprotein reductase] + O2 = (1'S,5'R)-5'-hydroxyaverantin + oxidized [NADPH--hemoprotein reductase] + H2O. It carries out the reaction (1'S)-averantin + reduced [NADPH--hemoprotein reductase] + O2 = (1'S,5'S)-5'-hydroxyaverantin + oxidized [NADPH--hemoprotein reductase] + H2O + H(+). It functions in the pathway mycotoxin biosynthesis. Functionally, averantin hydroxylase; part of the fragmented gene cluster that mediates the biosynthesis of dothistromin (DOTH), a polyketide toxin very similar in structure to the aflatoxin precursor, versicolorin B. The first step of the pathway is the conversion of acetate to norsolorinic acid (NOR) and requires the fatty acid synthase subunits hexA and hexB, as well as the polyketide synthase pksA. PksA combines a hexanoyl starter unit and 7 malonyl-CoA extender units to synthesize the precursor NOR. The hexanoyl starter unit is provided to the acyl-carrier protein (ACP) domain by the fungal fatty acid synthase hexA/hexB. The second step is the conversion of NOR to averantin (AVN) and requires the norsolorinic acid ketoreductase nor1, which catalyzes the dehydration of norsolorinic acid to form (1'S)-averantin. The cytochrome P450 monooxygenase avnA then catalyzes the hydroxylation of AVN to 5'hydroxyaverantin (HAVN). The next step is performed by adhA that transforms HAVN to averufin (AVF). Averufin might then be converted to hydroxyversicolorone by cypX and avfA. Hydroxyversicolorone is further converted versiconal hemiacetal acetate (VHA) by moxY. VHA is then the substrate for the versiconal hemiacetal acetate esterase est1 to yield versiconal (VAL). Versicolorin B synthase vbsA then converts VAL to versicolorin B (VERB) by closing the bisfuran ring. Then, the activity of the versicolorin B desaturase verB leads to versicolorin A (VERA). DotB, a predicted chloroperoxidase, may perform epoxidation of the A-ring of VERA. Alternatively, a cytochrome P450, such as cypX or avnA could catalyze this step. It is also possible that another, uncharacterized, cytochrome P450 enzyme is responsible for this step. Opening of the epoxide could potentially be achieved by the epoxide hydrolase epoA. However, epoA seems not to be required for DOTH biosynthesis, but other epoxide hydrolases may have the ability to complement this hydrolysis. Alternatively, opening of the epoxide ring could be achieved non-enzymatically. The next step is the deoxygenation of ring A to yield the 5,8-dihydroxyanthraquinone which is most likely catalyzed by the NADPH dehydrogenase encoded by ver1. The last stages of DOTH biosynthesis are proposed to involve hydroxylation of the bisfuran. OrdB and norB might have oxidative roles here. An alternative possibility is that cytochrome P450 monoogenases such as avnA and cypX might perform these steps in addition to previously proposed steps. This chain is Averantin hydroxylase, found in Dothistroma septosporum (strain NZE10 / CBS 128990) (Red band needle blight fungus).